A 360-amino-acid polypeptide reads, in one-letter code: uncharacterized protein (360 aa).

Residue 4–22 (KVLHIGAGGFGERWCDTFL) coordinates NAD(+).

Its function is as follows. Could be a NAD-dependent oxidoreductase. This is an uncharacterized protein from Sinorhizobium fredii (strain NBRC 101917 / NGR234).